Consider the following 590-residue polypeptide: Vesicular glutamate transporter 3 (590 aa).

Residues 1–76 (MPLGGFAGLK…CGCFGLPKRY (76 aa)) lie on the Cytoplasmic side of the membrane. The chain crosses the membrane as a helical span at residues 77–97 (IIAMLSGLGFCISFGIRCNLG). Over 98–130 (VAIVEMVNNNTVYINGTAVMQPAQFNWDPETVG) the chain is Vesicular. N-linked (GlcNAc...) asparagine glycans are attached at residues N106 and N112. The helical transmembrane segment at 131 to 151 (LIHGSFFWGYIVTQIPGGFIS) threads the bilayer. Residues 152–153 (NK) lie on the Cytoplasmic side of the membrane. A helical membrane pass occupies residues 154-174 (LAANRVFGAAIFLTSVLNMFI). At 175–182 (PSAARVHY) the chain is on the vesicular side. Residues 183–203 (GCVMFVRILQGLVEGVTYPAC) traverse the membrane as a helical segment. Residues 204-221 (HGMWSKWAPPLERSRLAT) are Cytoplasmic-facing. A helical membrane pass occupies residues 222–242 (TSFCGSYAGAVIAMPLAGILV). The Vesicular segment spans residues 243-249 (QYVGWPS). The helical transmembrane segment at 250-270 (VFYIYGVFGIIWYIFWILLAY) threads the bilayer. The Cytoplasmic segment spans residues 271–315 (NSPAVHPTISEEERNYIETSIGEGANLMSSTEKFKTPWREFFTSM). The chain crosses the membrane as a helical span at residues 316–336 (PVYAIIVANFCRSWTFYLLLI). Residues 337–354 (SQPAYFEEVFGFPISKVG) are Vesicular-facing. The helical transmembrane segment at 355–375 (ILSAVPHMVMTIIVPIGGQLA) threads the bilayer. The Cytoplasmic segment spans residues 376–391 (DFLRSRKILSTTTVRK). The helical transmembrane segment at 392 to 412 (IMNCGGFGMEATLLLVVGFSH) threads the bilayer. At 413–414 (TR) the chain is on the vesicular side. A helical transmembrane segment spans residues 415 to 435 (AVAISFLILAVGFSGFAISGF). Residues 436-448 (NVNHLDIAPRYAS) lie on the Cytoplasmic side of the membrane. Residues 449–469 (ILMGISNGVGTLSGMVCPLIV) form a helical membrane-spanning segment. The Vesicular portion of the chain corresponds to 470–482 (GALTKHKTRLEWQ). A helical transmembrane segment spans residues 483–503 (HVFVIASMVHYTGVIFYAIFA). At 504–587 (SGEKQDWADP…NHYENGEYQT (84 aa)) the chain is on the cytoplasmic side. Acidic residues predominate over residues 526 to 535 (EDELADETEP). Residues 526-590 (EDELADETEP…ENGEYQTQYQ (65 aa)) form a disordered region. The span at 536–557 (SSDSGLATRQKTYGTTDNSSGR) shows a compositional bias: polar residues.

It belongs to the major facilitator superfamily. Sodium/anion cotransporter family. VGLUT subfamily.

It is found in the cytoplasmic vesicle. The protein localises to the secretory vesicle. The protein resides in the synaptic vesicle membrane. Its subcellular location is the cell membrane. It localises to the synapse. It is found in the synaptosome. The catalysed reaction is L-glutamate(out) = L-glutamate(in). It catalyses the reaction 3 Na(+)(out) + phosphate(out) = 3 Na(+)(in) + phosphate(in). It carries out the reaction chloride(in) = chloride(out). With respect to regulation, the L-glutamate uniporter activity exhibits a biphasic dependence on chloride concentration. Chloride channel activity is allosterically activated by lumenal H(+) and Cl(-) leading to synaptic vesicles acidification. The glutamate transport activity is allosterically activated by lumenal H(+) and Cl(-), preventing non-vesicular L-glutamate release. Its function is as follows. Multifunctional transporter that transports L-glutamate as well as multiple ions such as chloride, sodium and phosphate. At the synaptic vesicle membrane, mainly functions as an uniporter that mediates the uptake of L-glutamate into synaptic vesicles at presynaptic nerve terminals of excitatory neural cells. The L-glutamate uniporter activity is electrogenic and is driven by the proton electrochemical gradient, mainly by the electrical gradient established by the vacuolar H(+)-ATPase across the synaptic vesicle membrane. In addition, functions as a chloride channel that allows a chloride permeation through the synaptic vesicle membrane that affects the proton electrochemical gradient and promotes synaptic vesicles acidification. At the plasma membrane, following exocytosis, functions as a symporter of Na(+) and phosphate from the extracellular space to the cytoplasm allowing synaptic phosphate homeostasis regulation. The symporter activity is electrogenic. Moreover, operates synergistically with SLC18A3/VACHT under a constant H(+) gradient, thereby allowing striatal vesicular acetylcholine uptake. The protein is Vesicular glutamate transporter 3 of Danio rerio (Zebrafish).